The primary structure comprises 116 residues: Large ribosomal subunit protein bL20 (116 aa).

This sequence belongs to the bacterial ribosomal protein bL20 family.

In terms of biological role, binds directly to 23S ribosomal RNA and is necessary for the in vitro assembly process of the 50S ribosomal subunit. It is not involved in the protein synthesizing functions of that subunit. The protein is Large ribosomal subunit protein bL20 of Desulfatibacillum aliphaticivorans.